The primary structure comprises 346 residues: tRNA(Ile)-lysidine synthase (346 aa).

ATP is bound at residue 32–37 (SGGPDS).

The protein belongs to the tRNA(Ile)-lysidine synthase family.

The protein resides in the cytoplasm. The catalysed reaction is cytidine(34) in tRNA(Ile2) + L-lysine + ATP = lysidine(34) in tRNA(Ile2) + AMP + diphosphate + H(+). Ligates lysine onto the cytidine present at position 34 of the AUA codon-specific tRNA(Ile) that contains the anticodon CAU, in an ATP-dependent manner. Cytidine is converted to lysidine, thus changing the amino acid specificity of the tRNA from methionine to isoleucine. The polypeptide is tRNA(Ile)-lysidine synthase (Rhodopseudomonas palustris (strain ATCC BAA-98 / CGA009)).